We begin with the raw amino-acid sequence, 174 residues long: Anthrone oxygenase CPUR_05435 (174 aa).

Transmembrane regions (helical) follow at residues 13-33 (VALA…AIMI), 56-76 (YGSV…GFAS), 88-108 (CLAA…AMIP), and 140-160 (WVVL…MGFT).

The protein belongs to the anthrone oxygenase family.

The protein resides in the membrane. The catalysed reaction is emodin anthrone + O2 = emodin + H2O + H(+). Anthrone oxygenase; part of the ergochrome gene cluster responsible for the typical purple-black color of the ergot sclerotia. The ergochrome gene cluster produces several ergot pigments including the yellow ergochrome secalonic acid and its derivatives, as well as the red anthraquinones endocrocin and clavorubin. The pathway begins with the synthesis of atrochrysone thioester by the polyketide synthase (PKS) CPUR_05437. The atrochrysone carboxyl ACP thioesterase CPUR_05436 then breaks the thioester bond and releases the atrochrysone carboxylic acid from CPUR_05437. The decarboxylase CPUR_05434 then catalyzes the concerted decarboxylation-elimination required to convert atochrysone carboxylic acid into emodin anthrone, which is further oxidized to emodin by the anthrone oxygenase CPUR_05435. Emodin is further modified to yield monodictyphenone via several steps involving CPUR_05427, CPUR_05428, CPUR_05429 and CPUR_05430. The short chain dehydrogenase/reductase CPUR_05418 then catalyzes the C-5 ketoreduction to give the xanthone skeleton of the monomeric units. Ergochromes formation requires further dimerization steps of different xanthone units, probably catalyzed by the cytochrome P450 monooxygenase CPUR_05419. CPUR_05425, CPUR_05426 and CPUR_05431 are unique to Claviceps, thus it is likely that they are involved in further modification of xanthone units or in their dimerization. The yellow ergochromes and the red anthraquinone pigments endocrocin and clavorubin are products from the same PKS derived precursors and the latter are likely shunt products in the pathway of xanthone biosynthesis. It is proposed that atrochrysone carboxylic acid released from the PKS CPUR_05437 can also be converted to endocrocin anthrone which is further oxidized into endocrocin by CPUR_05435. Endocrocin could be then modified to clavorubin, possibly by CPUR_05423 and CPUR_05431. Clavorubin is the principal anthraquinone metabolite produced by the cluster with a much higher yield compared to endocrocin. This chain is Anthrone oxygenase CPUR_05435, found in Claviceps purpurea (strain 20.1) (Ergot fungus).